Consider the following 75-residue polypeptide: UPF0270 protein PputGB1_1339 (75 aa).

Belongs to the UPF0270 family.

In Pseudomonas putida (strain GB-1), this protein is UPF0270 protein PputGB1_1339.